The sequence spans 102 residues: MFAIIETGGKQIKVEEGQEIYVEKLNANEGDSFTFDKVLFVGGDSVKVGAPTVEGASVTATVNKQGRGKKITVFTYKRRKDSKRKKGHRQPYTKLTIDKINA.

Residues 79–91 are compositionally biased toward basic residues; that stretch reads RKDSKRKKGHRQP. Residues 79–102 are disordered; it reads RKDSKRKKGHRQPYTKLTIDKINA.

Belongs to the bacterial ribosomal protein bL21 family. In terms of assembly, part of the 50S ribosomal subunit. Contacts protein L20.

This protein binds to 23S rRNA in the presence of protein L20. The chain is Large ribosomal subunit protein bL21 from Staphylococcus epidermidis (strain ATCC 35984 / DSM 28319 / BCRC 17069 / CCUG 31568 / BM 3577 / RP62A).